A 106-amino-acid chain; its full sequence is Large ribosomal subunit protein uL23 (106 aa).

This sequence belongs to the universal ribosomal protein uL23 family. Part of the 50S ribosomal subunit. Contacts protein L29, and trigger factor when it is bound to the ribosome.

In terms of biological role, one of the early assembly proteins it binds 23S rRNA. One of the proteins that surrounds the polypeptide exit tunnel on the outside of the ribosome. Forms the main docking site for trigger factor binding to the ribosome. This Acinetobacter baumannii (strain AB307-0294) protein is Large ribosomal subunit protein uL23.